Reading from the N-terminus, the 234-residue chain is NLP effector protein 1 (234 aa).

An N-terminal signal peptide occupies residues 1 to 18 (MQLRAFISVFASLACVNA). N-linked (GlcNAc...) asparagine glycosylation occurs at N66. The short motif at 102–112 (AFMYSWYMPKD) is the Conserved undecapeptide motif I element. Residues 119–125 (GHRHDWE) carry the Hepta-peptide GHRHDWE motif II motif.

This sequence belongs to the Necrosis inducing protein (NPP1) family.

It localises to the secreted. Secreted effector that contributes to virulence during infection by P.capsici. Induces distinct chlorosis at 3 days after inoculation of host C.annuum leaves, and all the chlorotic areas gradually turn brown and become moderately necrotic at 7 days after inoculation. Leads only to chlorotic areas, without necrosis at 7 days after non-host N.benthamiana leaves infection. Induces cell death in hot pepper. In Phytophthora capsici, this protein is NLP effector protein 1.